Consider the following 941-residue polypeptide: Bifunctional glutamine synthetase adenylyltransferase/adenylyl-removing enzyme (941 aa).

An adenylyl removase region spans residues 1 to 431 (MSSAPPFAAA…TFRNAFRLAG (431 aa)). Positions 447-941 (NGHAMRPHAG…DGTIAQAEVK (495 aa)) are adenylyl transferase.

Belongs to the GlnE family. Mg(2+) is required as a cofactor.

It catalyses the reaction [glutamine synthetase]-O(4)-(5'-adenylyl)-L-tyrosine + phosphate = [glutamine synthetase]-L-tyrosine + ADP. It carries out the reaction [glutamine synthetase]-L-tyrosine + ATP = [glutamine synthetase]-O(4)-(5'-adenylyl)-L-tyrosine + diphosphate. In terms of biological role, involved in the regulation of glutamine synthetase GlnA, a key enzyme in the process to assimilate ammonia. When cellular nitrogen levels are high, the C-terminal adenylyl transferase (AT) inactivates GlnA by covalent transfer of an adenylyl group from ATP to specific tyrosine residue of GlnA, thus reducing its activity. Conversely, when nitrogen levels are low, the N-terminal adenylyl removase (AR) activates GlnA by removing the adenylyl group by phosphorolysis, increasing its activity. The regulatory region of GlnE binds the signal transduction protein PII (GlnB) which indicates the nitrogen status of the cell. This Bordetella pertussis (strain Tohama I / ATCC BAA-589 / NCTC 13251) protein is Bifunctional glutamine synthetase adenylyltransferase/adenylyl-removing enzyme.